We begin with the raw amino-acid sequence, 186 residues long: UPF0301 protein Daro_3893 (186 aa).

Belongs to the UPF0301 (AlgH) family.

This is UPF0301 protein Daro_3893 from Dechloromonas aromatica (strain RCB).